Consider the following 500-residue polypeptide: Glycerol kinase (500 aa).

Position 11 (threonine 11) interacts with ADP. Positions 11, 12, and 13 each coordinate ATP. Threonine 11 lines the sn-glycerol 3-phosphate pocket. An ADP-binding site is contributed by arginine 15. Arginine 81, glutamate 82, tyrosine 133, and aspartate 242 together coordinate sn-glycerol 3-phosphate. 5 residues coordinate glycerol: arginine 81, glutamate 82, tyrosine 133, aspartate 242, and glutamine 243. The ADP site is built by threonine 264 and glycine 307. ATP-binding residues include threonine 264, glycine 307, glutamine 311, and glycine 411. Glycine 411 lines the ADP pocket.

This sequence belongs to the FGGY kinase family.

It carries out the reaction glycerol + ATP = sn-glycerol 3-phosphate + ADP + H(+). Its pathway is polyol metabolism; glycerol degradation via glycerol kinase pathway; sn-glycerol 3-phosphate from glycerol: step 1/1. Inhibited by fructose 1,6-bisphosphate (FBP). Its function is as follows. Key enzyme in the regulation of glycerol uptake and metabolism. Catalyzes the phosphorylation of glycerol to yield sn-glycerol 3-phosphate. The protein is Glycerol kinase of Rhodopseudomonas palustris (strain ATCC BAA-98 / CGA009).